A 310-amino-acid chain; its full sequence is Olfactory receptor 4D1 (310 aa).

Over 1–25 (MEPQNTTQVSMFVLLGFSQTQELQK) the chain is Extracellular. N-linked (GlcNAc...) asparagine glycosylation is present at Asn-5. The chain crosses the membrane as a helical span at residues 26-49 (FLFLLFLLVYVTTIVGNLLIMVTV). Topologically, residues 50–57 (TFDCRLHT) are cytoplasmic. A helical transmembrane segment spans residues 58 to 79 (PMYFLLRNLALIDLCYSTVTSP). Residues 80-100 (KMLVDFLHETKTISYQGCMAQ) lie on the Extracellular side of the membrane. Cys-97 and Cys-189 are disulfide-bonded. A helical transmembrane segment spans residues 101–120 (IFFFHLLGGGTVFFLSVMAY). Over 121-139 (DRYIAISQPLRYVTIMNTQ) the chain is Cytoplasmic. The helical transmembrane segment at 140 to 158 (LCVGLVVAAWVGGFVHSIV) threads the bilayer. Residues 159 to 195 (QLALILPLPFCGPNILDNFYCDVPQVLRLACTDTSLL) lie on the Extracellular side of the membrane. Residues 196–219 (EFLMISNSGLLVIIWFLLLLISYT) traverse the membrane as a helical segment. At 220-235 (VILVMLRSHSGKARRK) the chain is on the cytoplasmic side. The helical transmembrane segment at 236-258 (AASTCTTHIIVVSMIFIPCIYIY) threads the bilayer. The Extracellular segment spans residues 259–269 (TWPFTPFLMDK). The helical transmembrane segment at 270–289 (AVSISYTVMTPMLNPMIYTL) threads the bilayer. The Cytoplasmic segment spans residues 290–310 (RNQDMKAAMRRLGKCLVICRE).

Belongs to the G-protein coupled receptor 1 family.

The protein localises to the cell membrane. Its function is as follows. Odorant receptor. This is Olfactory receptor 4D1 (OR4D1) from Homo sapiens (Human).